The sequence spans 274 residues: Protein LIKE COV 3 (274 aa).

The Cytoplasmic segment spans residues M1–G60. A helical transmembrane segment spans residues C61 to V81. The Extracellular segment spans residues D82 to G93. The chain crosses the membrane as a helical span at residues I94 to F114. At M115–T274 the chain is on the cytoplasmic side.

This sequence belongs to the plant COV1 protein family.

The protein resides in the membrane. This chain is Protein LIKE COV 3, found in Arabidopsis thaliana (Mouse-ear cress).